The chain runs to 365 residues: Succinyl-diaminopimelate desuccinylase (365 aa).

His-65 serves as a coordination point for Zn(2+). Asp-67 is a catalytic residue. Asp-96 provides a ligand contact to Zn(2+). The active-site Proton acceptor is the Glu-126. Residues Glu-127, Glu-155, and His-340 each coordinate Zn(2+).

The protein belongs to the peptidase M20A family. DapE subfamily. In terms of assembly, homodimer. Zn(2+) is required as a cofactor. Requires Co(2+) as cofactor.

It catalyses the reaction N-succinyl-(2S,6S)-2,6-diaminopimelate + H2O = (2S,6S)-2,6-diaminopimelate + succinate. It participates in amino-acid biosynthesis; L-lysine biosynthesis via DAP pathway; LL-2,6-diaminopimelate from (S)-tetrahydrodipicolinate (succinylase route): step 3/3. Functionally, catalyzes the hydrolysis of N-succinyl-L,L-diaminopimelic acid (SDAP), forming succinate and LL-2,6-diaminopimelate (DAP), an intermediate involved in the bacterial biosynthesis of lysine and meso-diaminopimelic acid, an essential component of bacterial cell walls. The polypeptide is Succinyl-diaminopimelate desuccinylase (Campylobacter jejuni subsp. doylei (strain ATCC BAA-1458 / RM4099 / 269.97)).